The chain runs to 283 residues: UPF0273 protein STK_18300 (283 aa).

The region spanning 4-249 (LRVRTYIPGF…YLRITNVKAE (246 aa)) is the KaiC domain. ATP is bound at residue 31–38 (GGPGTGKS). Positions 261-283 (MKKAVEESEEEKESIQEAEIEEE) are disordered. Residues 267–283 (ESEEEKESIQEAEIEEE) are compositionally biased toward acidic residues.

This sequence belongs to the UPF0273 family.

The sequence is that of UPF0273 protein STK_18300 from Sulfurisphaera tokodaii (strain DSM 16993 / JCM 10545 / NBRC 100140 / 7) (Sulfolobus tokodaii).